Reading from the N-terminus, the 413-residue chain is Divalent metal cation transporter MntH (413 aa).

The Cytoplasmic portion of the chain corresponds to 1–19; it reads MTDNRVENSSGRAARKLRL. The chain crosses the membrane as a helical span at residues 20-39; that stretch reads ALMGPAFIAAIGYIDPGNFA. Over 40–51 the chain is Periplasmic; that stretch reads TNIQAGASFGYQ. The chain crosses the membrane as a helical span at residues 52–71; that stretch reads LLWVVVWANLMAMLIQILSA. At 72 to 95 the chain is on the cytoplasmic side; that stretch reads KLGIATGKNLAEQIRDHYPRPVVW. A helical transmembrane segment spans residues 96–118; sequence FYWVQAEIIAMATDLAEFIGAAI. The Periplasmic segment spans residues 119–125; sequence GFKLILG. A helical transmembrane segment spans residues 126–145; the sequence is VSLLQGAVLTGIATFLILML. Residues 146-155 are Cytoplasmic-facing; sequence QRRGQKPLEK. A helical transmembrane segment spans residues 156–175; that stretch reads VIGGLLLFVAAAYIVELFFS. Over 176 to 196 the chain is Periplasmic; sequence QPDMAQLGKGMVIPALPNPEA. Residues 197-220 form a helical membrane-spanning segment; it reads VFLAAGVLGATIMPHVIYLHSSLT. Residues 221–238 are Cytoplasmic-facing; sequence QHLHGGTRQQRYSATKWD. A helical transmembrane segment spans residues 239 to 258; the sequence is VAIAMTIAGFVNLAMMATAA. At 259–276 the chain is on the periplasmic side; that stretch reads AAFHFSGHTGIADLDQAY. A helical transmembrane segment spans residues 277–297; it reads LTLEPLLSHAAATVFGLSLVA. Residues 298–327 are Cytoplasmic-facing; the sequence is AGLSSTVVGTLAGQVVMQGFVRFHIPLWVR. Residues 328–344 traverse the membrane as a helical segment; the sequence is RTITMLPSFIVILMGLD. At 345–350 the chain is on the periplasmic side; sequence PTRILV. The helical transmembrane segment at 351 to 370 threads the bilayer; that stretch reads MSQVLLSFGIALALVPLLIF. Over 371-387 the chain is Cytoplasmic; sequence TSNATLMGELVNTRRVK. The helical transmembrane segment at 388–406 threads the bilayer; it reads QVGWIIVVLVVALNIWLLV. Residues 407–413 are Periplasmic-facing; sequence GTVMGLS.

This sequence belongs to the NRAMP family.

Its subcellular location is the cell inner membrane. H(+)-stimulated, divalent metal cation uptake system. The protein is Divalent metal cation transporter MntH of Salmonella paratyphi C (strain RKS4594).